The primary structure comprises 332 residues: 2,3-diketo-L-gulonate reductase (332 aa).

The Proton donor role is filled by histidine 44. NAD(+) contacts are provided by residues 168 to 174, 224 to 225, and 304 to 306; these read ITMVDMS, WK, and GHE.

Belongs to the LDH2/MDH2 oxidoreductase family. DlgD subfamily. Homodimer.

It localises to the cytoplasm. It catalyses the reaction 3-dehydro-L-gulonate + NAD(+) = 2,3-dioxo-L-gulonate + NADH + H(+). The catalysed reaction is 3-dehydro-L-gulonate + NADP(+) = 2,3-dioxo-L-gulonate + NADPH + H(+). Catalyzes the reduction of 2,3-diketo-L-gulonate in the presence of NADH, to form 3-keto-L-gulonate. The chain is 2,3-diketo-L-gulonate reductase from Salmonella paratyphi A (strain ATCC 9150 / SARB42).